Consider the following 104-residue polypeptide: Protein S100-A14 (104 aa).

The EF-hand domain occupies 27–61 (KNFHQYSVEGGKETLTPSELRDLVTQQLPHLMPSN).

Belongs to the S-100 family. Homodimer. Interacts with AGER.

The protein localises to the cytoplasm. In terms of biological role, modulates P53/TP53 protein levels, and thereby plays a role in the regulation of cell survival and apoptosis. Depending on the context, it can promote cell proliferation or apoptosis. Plays a role in the regulation of cell migration by modulating the levels of MMP2, a matrix protease that is under transcriptional control of P53/TP53. Does not bind calcium. The protein is Protein S100-A14 (S100A14) of Bos taurus (Bovine).